The following is a 287-amino-acid chain: Aquaporin PIP1-1 (287 aa).

Transmembrane regions (helical) follow at residues 57–77 and 92–114; these read IAEF…VMGV and IAWS…SGHI. The short motif at 115-117 is the NPA 1 element; that stretch reads NPA. 3 helical membrane passes run 134-154, 176-196, and 210-230; these read VFYI…VKGF, GDGL…VFSA, and ILAP…TMGI. Positions 236-238 match the NPA 2 motif; the sequence is NPA. Residues 258 to 278 traverse the membrane as a helical segment; it reads IFWVGPFIGAALAAIYHQVII.

The protein belongs to the MIP/aquaporin (TC 1.A.8) family. PIP (TC 1.A.8.11) subfamily. As to quaternary structure, may interact with PIP1-2 to form heteromers. In terms of tissue distribution, highly expressed in roots, shoots and developing tassels, and at lower levels in leaves.

The protein resides in the cell membrane. Its function is as follows. Water channel required to facilitate the transport of water across cell membrane. Active as heteromers with PIP1-2, but not as homomers. In Zea mays (Maize), this protein is Aquaporin PIP1-1 (PIP1-1).